A 126-amino-acid chain; its full sequence is RutC family protein SSO3206 (126 aa).

Belongs to the RutC family.

The protein is RutC family protein SSO3206 of Saccharolobus solfataricus (strain ATCC 35092 / DSM 1617 / JCM 11322 / P2) (Sulfolobus solfataricus).